A 1275-amino-acid chain; its full sequence is O-antigen biosynthesis protein RfbC (1275 aa).

Involved in O-antigen biosynthesis. The chain is O-antigen biosynthesis protein RfbC (rfbC) from Myxococcus xanthus.